An 876-amino-acid chain; its full sequence is Valine--tRNA ligase (876 aa).

The short motif at 44–54 (PNVTGKLHLGH) is the 'HIGH' region element. Residues 520–524 (KMSKS) carry the 'KMSKS' region motif. K523 contributes to the ATP binding site. Positions 805 to 876 (LEGLIDMDKE…VKARIEQLKA (72 aa)) form a coiled coil.

The protein belongs to the class-I aminoacyl-tRNA synthetase family. ValS type 1 subfamily. In terms of assembly, monomer.

Its subcellular location is the cytoplasm. The enzyme catalyses tRNA(Val) + L-valine + ATP = L-valyl-tRNA(Val) + AMP + diphosphate. Functionally, catalyzes the attachment of valine to tRNA(Val). As ValRS can inadvertently accommodate and process structurally similar amino acids such as threonine, to avoid such errors, it has a 'posttransfer' editing activity that hydrolyzes mischarged Thr-tRNA(Val) in a tRNA-dependent manner. The sequence is that of Valine--tRNA ligase from Staphylococcus aureus (strain JH1).